The following is a 205-amino-acid chain: Regulator of G-protein signaling 4 (205 aa).

3 S-palmitoyl cysteine lipidation sites follow: Cys-2, Cys-12, and Cys-95. Positions 62 to 178 (SLENLISHEC…LKSRFYLDLV (117 aa)) constitute an RGS domain.

In terms of processing, palmitoylated on Cys-2 and/or Cys-12. Post-translationally, phosphorylated by cyclic GMP-dependent protein kinase. As to expression, expressed in brain and heart. Expressed in brain at protein level. Expressed in prefontal and visual cortex. Isoform 4 and isoform 5 are expressed ubiquitously. Isoform 1, isoform 2 and isoform 3 are not expressed in the cerebellum.

Inhibits signal transduction by increasing the GTPase activity of G protein alpha subunits thereby driving them into their inactive GDP-bound form. Activity on G(z)-alpha is inhibited by phosphorylation of the G-protein. Activity on G(z)-alpha and G(i)-alpha-1 is inhibited by palmitoylation of the G-protein. This chain is Regulator of G-protein signaling 4 (RGS4), found in Homo sapiens (Human).